Here is a 671-residue protein sequence, read N- to C-terminus: Phospholipid:diacylglycerol acyltransferase 1 (671 aa).

Residues 1-46 (MPLIHRKKPTEKPSTPPSEEVVHDEDSQKKPHESSKSHHKKSNGGG) are disordered. The Cytoplasmic segment spans residues 1–54 (MPLIHRKKPTEKPSTPPSEEVVHDEDSQKKPHESSKSHHKKSNGGGKWSCIDSC). Basic and acidic residues predominate over residues 20-36 (EVVHDEDSQKKPHESSK). The chain crosses the membrane as a helical span at residues 55–75 (CWFIGCVCVTWWFLLFLYNAM). The Lumenal portion of the chain corresponds to 76–671 (PASFPQYVTE…EWSERIDLKL (596 aa)). N-linked (GlcNAc...) asparagine glycosylation occurs at Asn161. Ser254 functions as the Acyl-ester intermediate in the catalytic mechanism. 2 N-linked (GlcNAc...) asparagine glycosylation sites follow: Asn381 and Asn434. Active-site charge relay system residues include Asp573 and His626. A glycan (N-linked (GlcNAc...) asparagine) is linked at Asn647.

This sequence belongs to the AB hydrolase superfamily. Lipase family. Ubiquitous. Highest expression in young developing seeds.

The protein localises to the membrane. It carries out the reaction a glycerophospholipid + a 1,2-diacyl-sn-glycerol = a monoacylglycerophospholipid + a triacyl-sn-glycerol. Its pathway is glycerolipid metabolism; triacylglycerol biosynthesis. In terms of biological role, triacylglycerol formation by an acyl-CoA independent pathway. The enzyme preferentially transfers acyl groups from the sn-2 position of a phospholipid to diacylglycerol, thus forming an sn-1-lysophospholipid. Involved in epoxy and hydroxy fatty acid accumulation in seeds. Has complementary functions with DAG1 that are essential for triacylglycerol synthesis and normal development of both seeds and pollen. The protein is Phospholipid:diacylglycerol acyltransferase 1 (PDAT1) of Arabidopsis thaliana (Mouse-ear cress).